The primary structure comprises 164 residues: Small ribosomal subunit protein uS5 (164 aa).

The S5 DRBM domain maps to 10-73 (LEERVVAINR…EDAKKNLIEV (64 aa)).

This sequence belongs to the universal ribosomal protein uS5 family. As to quaternary structure, part of the 30S ribosomal subunit. Contacts proteins S4 and S8.

In terms of biological role, with S4 and S12 plays an important role in translational accuracy. Functionally, located at the back of the 30S subunit body where it stabilizes the conformation of the head with respect to the body. This is Small ribosomal subunit protein uS5 from Streptococcus gordonii (strain Challis / ATCC 35105 / BCRC 15272 / CH1 / DL1 / V288).